A 358-amino-acid polypeptide reads, in one-letter code: Leukotriene B4 receptor 2 (358 aa).

Residues 1 to 24 (MSVCYRPPGNETLLSWKTSRATGT) lie on the Extracellular side of the membrane. Residue asparagine 10 is glycosylated (N-linked (GlcNAc...) asparagine). A helical membrane pass occupies residues 25-45 (AFLLLAALLGLPGNGFVVWSL). The Cytoplasmic portion of the chain corresponds to 46–60 (AGWRPARGRPLAATL). Residues 61–81 (VLHLALADGAVLLLTPLFVAF) traverse the membrane as a helical segment. Residues 82-96 (LTRQAWPLGQAGCKA) lie on the Extracellular side of the membrane. The chain crosses the membrane as a helical span at residues 97 to 117 (VYYVCALSMYASVLLTGLLSL). Over 118-140 (QRCLAVTRPFLAPRLRSPALARR) the chain is Cytoplasmic. Residues 141–161 (LLLAVWLAALLLAVPAAVYRH) traverse the membrane as a helical segment. Over 162-185 (LWRDRVCQLCHPSPVHAAAHLSLE) the chain is Extracellular. A helical membrane pass occupies residues 186–206 (TLTAFVLPFGLMLGCYSVTLA). Topologically, residues 207-224 (RLRGARWGSGRHGARVGR) are cytoplasmic. A helical transmembrane segment spans residues 225 to 245 (LVSAIVLAFGLLWAPYHAVNL). Residues 246–275 (LQAVAALAPPEGALAKLGGAGQAARAGTTA) are Extracellular-facing. The chain crosses the membrane as a helical span at residues 276–296 (LAFFSSSVNPVLYVFTAGDLL). The Cytoplasmic segment spans residues 297 to 358 (PRAGPRFLTR…MEKDGPEWDL (62 aa)). Positions 311-358 (SGEARGGGRSREGTMELRTTPQLKVVGQGRGNGDPGGGMEKDGPEWDL) are disordered. Over residues 338-348 (QGRGNGDPGGG) the composition is skewed to gly residues. Residues 349–358 (MEKDGPEWDL) show a composition bias toward basic and acidic residues.

This sequence belongs to the G-protein coupled receptor 1 family. In terms of tissue distribution, widely expressed.

The protein localises to the cell membrane. Its function is as follows. Low-affinity receptor for leukotrienes including leukotriene B4. Mediates chemotaxis of granulocytes and macrophages. The response is mediated via G-proteins that activate a phosphatidylinositol-calcium second messenger system. The rank order of affinities for the leukotrienes is LTB4 &gt; 12-epi-LTB4 &gt; LTB5 &gt; LTB3. This chain is Leukotriene B4 receptor 2 (LTB4R2), found in Homo sapiens (Human).